A 129-amino-acid chain; its full sequence is DNA-directed RNA polymerase subunit omega (129 aa).

Residues 76–101 (EVDEPEPDPVTLAASAADGEDDDQPE) form a disordered region.

It belongs to the RNA polymerase subunit omega family. The RNAP catalytic core consists of 2 alpha, 1 beta, 1 beta' and 1 omega subunit. When a sigma factor is associated with the core the holoenzyme is formed, which can initiate transcription.

The catalysed reaction is RNA(n) + a ribonucleoside 5'-triphosphate = RNA(n+1) + diphosphate. Its function is as follows. Promotes RNA polymerase assembly. Latches the N- and C-terminal regions of the beta' subunit thereby facilitating its interaction with the beta and alpha subunits. This Agrobacterium fabrum (strain C58 / ATCC 33970) (Agrobacterium tumefaciens (strain C58)) protein is DNA-directed RNA polymerase subunit omega.